The following is a 169-amino-acid chain: MTAQANNTIYGFSANALDGSPVALRDFEGKVLLIVNTASQCGFTPQYQGLQALYNRFGDRGFTVLGFPCNQFGQQEPGGSGEIKNFCETRYGVTFPLFEKVEVNGPNAHPLFKFLTAASPGMAIPFLGGAEDIKWNFTKFLVDRQGKVVKRYGSIAKPDEIAADIEKLL.

The active site involves C41.

It belongs to the glutathione peroxidase family. Monomer.

It carries out the reaction a hydroperoxy polyunsaturated fatty acid + NADPH + H(+) = a hydroxy polyunsaturated fatty acid + NADP(+) + H2O. Its activity is regulated as follows. Mercaptosuccinate, pCMB, and nethylmaleimide act as inhibitors of the catalytic activity. Functionally, hydroperoxy fatty acid reductase essential for the removal of lipid hydroperoxides under normal and stress conditions, leading to the protection of membrane integrity. The polypeptide is Hydroperoxy fatty acid reductase gpx1 (gpx1) (Synechocystis sp. (strain ATCC 27184 / PCC 6803 / Kazusa)).